A 370-amino-acid polypeptide reads, in one-letter code: MKYQLLKNCAGARRGRIQFDRGVVETPAFMPVGTYGTVKSLTTEEVKDTGTQMILCNAFHLWLRSEQEIIKLHGDLHHFMHWYGPIITDSGGFQIFSISNLNKITEAGVYFRHPINGSAIFLSPEKSMEIQYDLGSDIVMVLDECTPYPVQWDEAKKSMVMSLRWSERSHKRFHELKNNNALFGIIQGGMYKDLRDLSVKKLIEIGFDGYAIGGLSVGEPKENMHHILAHICPQLPEDKPRYLMGVGKPEDLIEGWRRGIDMFDCVIPTRNARNGHLFVTNGVVKIRNAKYKYDITSLDIYCDCYTCCNYSRAYLHHLSRCNEILGARLNTIHNLRYYQRLMADLRDAIDTGTSQYFIEEFYNKTRNSYY.

The Proton acceptor role is filled by aspartate 89. Substrate contacts are provided by residues 89 to 93 (DSGGF), aspartate 143, glutamine 187, and glycine 214. The segment at 245 to 251 (GVGKPED) is RNA binding. The active-site Nucleophile is aspartate 264. The interval 269 to 273 (TRNAR) is RNA binding; important for wobble base 34 recognition. 4 residues coordinate Zn(2+): cysteine 302, cysteine 304, cysteine 307, and histidine 333.

Belongs to the queuine tRNA-ribosyltransferase family. In terms of assembly, homodimer. Within each dimer, one monomer is responsible for RNA recognition and catalysis, while the other monomer binds to the replacement base PreQ1. Requires Zn(2+) as cofactor.

It carries out the reaction 7-aminomethyl-7-carbaguanine + guanosine(34) in tRNA = 7-aminomethyl-7-carbaguanosine(34) in tRNA + guanine. It participates in tRNA modification; tRNA-queuosine biosynthesis. In terms of biological role, catalyzes the base-exchange of a guanine (G) residue with the queuine precursor 7-aminomethyl-7-deazaguanine (PreQ1) at position 34 (anticodon wobble position) in tRNAs with GU(N) anticodons (tRNA-Asp, -Asn, -His and -Tyr). Catalysis occurs through a double-displacement mechanism. The nucleophile active site attacks the C1' of nucleotide 34 to detach the guanine base from the RNA, forming a covalent enzyme-RNA intermediate. The proton acceptor active site deprotonates the incoming PreQ1, allowing a nucleophilic attack on the C1' of the ribose to form the product. After dissociation, two additional enzymatic reactions on the tRNA convert PreQ1 to queuine (Q), resulting in the hypermodified nucleoside queuosine (7-(((4,5-cis-dihydroxy-2-cyclopenten-1-yl)amino)methyl)-7-deazaguanosine). This is Queuine tRNA-ribosyltransferase from Baumannia cicadellinicola subsp. Homalodisca coagulata.